We begin with the raw amino-acid sequence, 304 residues long: Non-specific ribonucleoside hydrolase RihC (304 aa).

His233 is a catalytic residue.

Belongs to the IUNH family. RihC subfamily.

In terms of biological role, hydrolyzes both purine and pyrimidine ribonucleosides with a broad-substrate specificity. This chain is Non-specific ribonucleoside hydrolase RihC, found in Escherichia fergusonii (strain ATCC 35469 / DSM 13698 / CCUG 18766 / IAM 14443 / JCM 21226 / LMG 7866 / NBRC 102419 / NCTC 12128 / CDC 0568-73).